A 2004-amino-acid chain; its full sequence is MVKLANPLYTEWILEAIKKVKKQKQRPSEERICNAVSSSHGLDRKTVLEQLELSVKDGTILKVSNKGLNSYKDPDNPGRIALPKPRNHGKLDNKQNVDWNKLIKRAVEGLAESGGSTLKSIERFLKGQKDVSALFGGSAASGFHQQLRLAIKRAIGHGRLLKDGPLYRLNTKATNVDGKESCESLSCLPPVSLLPHEKDKPVAEPIPICSFCLGTKEQNREKKPEELISCADCGNSGHPSCLKFSPELTVRVKALRWQCIECKTCSSCRDQGKNADNMLFCDSCDRGFHMECCDPPLTRMPKGMWICQICRPRKKGRKLLQKKAAQIKRRYTNPIGRPKNRLKKQNTVSKGPFSKVRTGPGRGRKRKITLSSQSASSSSEEGYLERIDGLDFCRDSNVSLKFNKKTKGLIDGLTKFFTPSPDGRKARGEVVDYSEQYRIRKRGNRKSSTSDWPTDNQDGWDGKQENEERLFGSQEIMTEKDMELFRDIQEQALQKVGVTGPPDPQVRCPSVIEFGKYEIHTWYSSPYPQEYSRLPKLYLCEFCLKYMKSRTILQQHMKKCGWFHPPANEIYRKNNISVFEVDGNVSTIYCQNLCLLAKLFLDHKTLYYDVEPFLFYVLTQNDVKGCHLVGYFSKEKHCQQKYNVSCIMILPQYQRKGYGRFLIDFSYLLSKREGQAGSPEKPLSDLGRLSYMAYWKSVILECLYHQNDKQISIKKLSKLTGICPQDITSTLHHLRMLDFRSDQFVIIRREKLIQDHMAKLQLNLRPVDVDPECLRWTPVIVSNSVVSEEEEEEAEEGENEEPQCQERELEISVGKSVSHENKEQDSYSVESEKKPEVMAPVSSTRLSKQVLPHDSLPANSQPSRRGRWGRKNRKTQERFGDKDSKLLLEETSSAPQEQYGECGEKSEATQEQYTESEEQLVASEEQPSQDGKPDLPKRRLSEGVEPWRGQLKKSPEALKCRLTEGSERLPRRYSEGDRAVLRGFSESSEEEEEPESPRSSSPPILTKPTLKRKKPFLHRRRRVRKRKHHNSSVVTETISETTEVLDEPFEDSDSERPMPRLEPTFEIDEEEEEEDENELFPREYFRRLSSQDVLRCQSSSKRKSKDEEEDEESDDADDTPILKPVSLLRKRDVKNSPLEPDTSTPLKKKKGWPKGKSRKPIHWKKRPGRKPGFKLSREIMPVSTQACVIEPIVSIPKAGRKPKIQESEETVEPKEDMPLPEERKEEEEMQAEAEEAEEGEEEDAASSEVPAASPADSSNSPETETKEPEVEEEEEKPRVSEEQRQSEEEQQELEEPEPEEEEDAAAETAQNDDHDADDEDDGHLESTKKKELEEQPTREDVKEEPGVQESFLDANMQKSREKIKDKEETELDSEEEQPSHDTSVVSEQMAGSEDDHEEDSHTKEELIELKEEEEIPHSELDLETVQAVQSLTQEESSEHEGAYQDCEETLAACQTLQSYTQADEDPQMSMVEDCHASEHNSPISSVQSHPSQSVRSVSSPNVPALESGYTQISPEQGSLSAPSMQNMETSPMMDVPSVSDHSQQVVDSGFSDLGSIESTTENYENPSSYDSTMGGSICGNSSSQSSCSYGGLSSSSSLTQSSCVVTQQMASMGSSCSMMQQSSVQPAANCSIKSPQSCVVERPPSNQQQQPPPPPPQQPQPPPPQPQPAPQPPPPQQQPQQQPQPQPQQPPPPPPPQQQPPLSQCSMNNSFTPAPMIMEIPESGSTGNISIYERIPGDFGAGSYSQPSATFSLAKLQQLTNTIMDPHAMPYSHSPAVTSYATSVSLSNTGLAQLAPSHPLAGTPQAQATMTPPPNLASTTMNLTSPLLQCNMSATNIGIPHTQRLQGQMPVKGHISIRSKSAPLPSAAAHQQQLYGRSPSAVAMQAGPRALAVQRGMNMGVNLMPTPAYNVNSMNMNTLNAMNSYRMTQPMMNSSYHSNPAYMNQTAQYPMQMQMGMMGSQAYTQQPMQPNPHGNMMYTGPSHHSYMNAAGVPKQSLNGPYMRR.

The SAMD1-like winged helix (WH) domain maps to Met-1–Pro-77. Residues Met-1–His-144 form a required for activation of RUNX1-1 region. The tract at residues Glu-52 to Leu-166 is required for nuclear localization. One can recognise an H15 domain in the interval Gln-95–Thr-171. An interaction with PML region spans residues His-144–Asp-664. An N6-acetyllysine modification is found at Lys-172. 2 PHD-type zinc fingers span residues Ile-206–Cys-265 and Cys-259–Arg-313. Residues Pro-312 to Asp-664 form an interaction with RUNX1-1 region. The interval Pro-334–Ala-375 is disordered. Residues Lys-350 and Lys-355 each carry the N6-acetyllysine modification. A Phosphothreonine; by PKB/AKT1 modification is found at Thr-369. Phosphoserine is present on Ser-420. A disordered region spans residues Lys-441–Gln-464. A compositionally biased stretch (polar residues) spans Lys-446–Gln-457. The residue at position 473 (Ser-473) is a Phosphoserine. Positions Ile-488–Pro-778 are catalytic. An MYST-type HAT domain is found at Pro-504–Pro-778. The segment at Arg-507–Glu-810 is mediates interaction with BRPF1, required for histone H3 acetyltransferase activity. The segment at Leu-537–Trp-562 adopts a C2HC MYST-type zinc-finger fold. N6-acetyllysine; by autocatalysis is present on Lys-604. Acetyl-CoA-binding positions include Ser-645 to Ile-649 and Gln-654 to Arg-660. The active-site Proton donor/acceptor is Glu-680. An acetyl-CoA-binding site is contributed by Ser-684. Disordered regions lie at residues Val-785–Asp-1445, Gln-1461–Gln-1621, and Ser-1637–Pro-1721. Phosphoserine occurs at positions 787 and 812. Acidic residues predominate over residues Ser-787 to Gln-803. At Lys-815 the chain carries N6-acetyllysine. The segment covering Val-817–Glu-836 has biased composition (basic and acidic residues). Lys-834 is covalently cross-linked (Glycyl lysine isopeptide (Lys-Gly) (interchain with G-Cter in SUMO2)). Basic residues predominate over residues Arg-864–Arg-873. Residues Lys-874–Leu-888 show a composition bias toward basic and acidic residues. A Phosphotyrosine modification is found at Tyr-899. Composition is skewed to basic and acidic residues over residues Gly-931–Glu-942 and Lys-953–Val-980. A phosphoserine mark is found at Ser-941, Ser-954, and Ser-974. The residue at position 1007 (Lys-1007) is an N6-acetyllysine. Over residues Thr-1009–Asn-1030 the composition is skewed to basic residues. Over residues Ser-1031 to Thr-1042 the composition is skewed to low complexity. 2 stretches are compositionally biased toward acidic residues: residues Glu-1043–Asp-1053 and Phe-1065–Glu-1078. Ser-1089, Ser-1090, and Ser-1113 each carry phosphoserine. Positions Glu-1107–Asp-1118 are enriched in acidic residues. A compositionally biased stretch (basic residues) spans Leu-1146 to Gly-1172. Residues Lys-1203–Arg-1223 are compositionally biased toward basic and acidic residues. The span at Lys-1224–Ala-1245 shows a compositional bias: acidic residues. The segment covering Ser-1246–Glu-1262 has biased composition (low complexity). Over residues Glu-1275–Glu-1287 the composition is skewed to basic and acidic residues. Residues Glu-1288–Ala-1305 show a composition bias toward acidic residues. 3 stretches are compositionally biased toward basic and acidic residues: residues His-1323 to Pro-1345, Lys-1358 to Glu-1367, and Glu-1398 to Leu-1420. A Glycyl lysine isopeptide (Lys-Gly) (interchain with G-Cter in SUMO2) cross-link involves residue Lys-1342. Residues Ser-1481 to Pro-1503 are compositionally biased toward low complexity. Positions Gly-1508–Thr-1529 are enriched in polar residues. The tract at residues Gly-1517–Arg-1642 is interaction with RUNX1-2. The segment at Gly-1517–Ala-1741 is interaction with PML. Over residues Asp-1534–Ser-1548 the composition is skewed to low complexity. Positions Ile-1556–Met-1573 are enriched in polar residues. The segment covering Gly-1574–Gln-1621 has biased composition (low complexity). Over residues Gln-1650–Gln-1699 the composition is skewed to pro residues. Residues Leu-1702 to Thr-1712 show a composition bias toward polar residues. Residues Ser-1913–Gln-1948 form a required for activation of RUNX1-2 region.

This sequence belongs to the MYST (SAS/MOZ) family. As to quaternary structure, component of the MOZ/MORF complex composed at least of ING5, KAT6A, KAT6B, MEAF6 and one of BRPF1, BRD1/BRPF2 and BRPF3. Interacts with RUNX1; phosphorylation of RUNX1 enhances the interaction. Interacts with RUNX2. Interacts with p53/TP53. Interacts with PML (isoform PML-4) and this interaction positively regulates its acetylation activity towards p53/TP53. Autoacetylation at Lys-604 is required for proper function. Autoacetylated. Post-translationally, phosphorylation at Thr-369 by PKB/AKT1 inhibits its interaction with PML and negatively regulates its acetylation activity towards p53/TP53.

It is found in the nucleus. The protein localises to the nucleolus. It localises to the nucleoplasm. The protein resides in the PML body. The enzyme catalyses L-lysyl-[protein] + acetyl-CoA = N(6)-acetyl-L-lysyl-[protein] + CoA + H(+). Its function is as follows. Histone acetyltransferase that acetylates lysine residues in histone H3 and histone H4 (in vitro). Component of the MOZ/MORF complex which has a histone H3 acetyltransferase activity. May act as a transcriptional coactivator for RUNX1 and RUNX2. Acetylates p53/TP53 at 'Lys-120' and 'Lys-382' and controls its transcriptional activity via association with PML. This is Histone acetyltransferase KAT6A (KAT6A) from Homo sapiens (Human).